The sequence spans 304 residues: m7GpppX diphosphatase (304 aa).

Residues Glu-152, Lys-174, and His-235–His-246 each bind substrate. The Histidine triad motif signature appears at His-242 to His-246. His-244 (nucleophile) is an active-site residue.

This sequence belongs to the HIT family.

The protein localises to the cytoplasm. Its subcellular location is the nucleus. The catalysed reaction is a 5'-end (N(7)-methyl 5'-triphosphoguanosine)-ribonucleoside in mRNA + H2O = N(7)-methyl-GMP + a 5'-end diphospho-ribonucleoside in mRNA + 2 H(+). Functionally, decapping scavenger enzyme that catalyzes the cleavage of a residual cap structure following the degradation of mRNAs by the 3'-&gt;5' exosome-mediated mRNA decay pathway. Hydrolyzes cap analog structures like 7-methylguanosine nucleoside triphosphate (m7GpppG) with up to 10 nucleotide substrates (small capped oligoribonucleotides) and specifically releases 5'-phosphorylated RNA fragments and 7-methylguanosine monophosphate (m7GMP). Has no activity towards mRNA molecules longer than 25 nucleotides. May also play a role in the 5'-&gt;3 mRNA decay pathway; m7GDP, the downstream product released by the 5'-&gt;3' mRNA mediated decapping activity, may be also converted by DCS1 to m7GMP. Inhibits mRNA translation. Binds to the m7GpppG cap analog. This Schizosaccharomyces pombe (strain 972 / ATCC 24843) (Fission yeast) protein is m7GpppX diphosphatase (nhm1).